We begin with the raw amino-acid sequence, 112 residues long: Pediocin PA-1 immunity protein (112 aa).

Imparts immunity to pediocin PA-1/ACH to naturally sensitive host strains. This is Pediocin PA-1 immunity protein (pedB) from Pediococcus acidilactici.